The sequence spans 338 residues: Lipoate-protein ligase A (338 aa).

Positions 29–216 constitute a BPL/LPL catalytic domain; the sequence is PATQRVLFLW…AFFSHYGERV (188 aa). Residues Arg-71, 76-79, and Lys-134 each bind ATP; that span reads GAVF. Residue Lys-134 participates in (R)-lipoate binding.

Belongs to the LplA family. Monomer.

Its subcellular location is the cytoplasm. The catalysed reaction is L-lysyl-[lipoyl-carrier protein] + (R)-lipoate + ATP = N(6)-[(R)-lipoyl]-L-lysyl-[lipoyl-carrier protein] + AMP + diphosphate + H(+). Its pathway is protein modification; protein lipoylation via exogenous pathway; protein N(6)-(lipoyl)lysine from lipoate: step 1/2. It functions in the pathway protein modification; protein lipoylation via exogenous pathway; protein N(6)-(lipoyl)lysine from lipoate: step 2/2. Functionally, catalyzes both the ATP-dependent activation of exogenously supplied lipoate to lipoyl-AMP and the transfer of the activated lipoyl onto the lipoyl domains of lipoate-dependent enzymes. This chain is Lipoate-protein ligase A, found in Klebsiella pneumoniae (strain 342).